Consider the following 1681-residue polypeptide: Meiosis regulator and mRNA stability factor 1 (1681 aa).

The NYN domain occupies I340–I477. 2 disordered regions span residues V576 to V595 and Q638 to F717. Residues Q638–S647 show a composition bias toward polar residues. A compositionally biased stretch (basic and acidic residues) spans Q648–D658. Polar residues predominate over residues K659 to S690. The span at Q692–V715 shows a compositional bias: basic and acidic residues. Residues A779–G858 enclose the RRM domain. HTH OST-type domains follow at residues S863 to G937, S991 to P1067, Q1087 to R1161, Q1163 to R1238, R1247 to M1321, R1323 to K1398, S1399 to L1472, and S1474 to D1548. Over residues E1637 to S1648 the composition is skewed to polar residues. A disordered region spans residues E1637 to Q1662. A compositionally biased stretch (basic and acidic residues) spans K1649–V1659.

Its subcellular location is the peroxisome. In terms of biological role, essential regulator of oogenesis required for female meiotic progression to repress transposable elements and preventing their mobilization, which is essential for the germline integrity. This is Meiosis regulator and mRNA stability factor 1 from Xenopus tropicalis (Western clawed frog).